The sequence spans 543 residues: Cytochrome P450 1B1 (543 aa).

Cys470 lines the heme pocket.

Belongs to the cytochrome P450 family. The cofactor is heme.

It is found in the endoplasmic reticulum membrane. The protein resides in the microsome membrane. It localises to the mitochondrion. The catalysed reaction is an organic molecule + reduced [NADPH--hemoprotein reductase] + O2 = an alcohol + oxidized [NADPH--hemoprotein reductase] + H2O + H(+). It carries out the reaction 17beta-estradiol + reduced [NADPH--hemoprotein reductase] + O2 = 2-hydroxy-17beta-estradiol + oxidized [NADPH--hemoprotein reductase] + H2O + H(+). The enzyme catalyses 17beta-estradiol + reduced [NADPH--hemoprotein reductase] + O2 = 4-hydroxy-17beta-estradiol + oxidized [NADPH--hemoprotein reductase] + H2O + H(+). It catalyses the reaction estrone + reduced [NADPH--hemoprotein reductase] + O2 = 2-hydroxyestrone + oxidized [NADPH--hemoprotein reductase] + H2O + H(+). The catalysed reaction is estrone + reduced [NADPH--hemoprotein reductase] + O2 = 4-hydroxyestrone + oxidized [NADPH--hemoprotein reductase] + H2O + H(+). It carries out the reaction testosterone + reduced [NADPH--hemoprotein reductase] + O2 = 6beta,17beta-dihydroxyandrost-4-en-3-one + oxidized [NADPH--hemoprotein reductase] + H2O + H(+). The enzyme catalyses progesterone + reduced [NADPH--hemoprotein reductase] + O2 = 6beta-hydroxyprogesterone + oxidized [NADPH--hemoprotein reductase] + H2O + H(+). It catalyses the reaction progesterone + reduced [NADPH--hemoprotein reductase] + O2 = 16alpha-hydroxyprogesterone + oxidized [NADPH--hemoprotein reductase] + H2O + H(+). The catalysed reaction is all-trans-retinol + reduced [NADPH--hemoprotein reductase] + O2 = all-trans-retinal + oxidized [NADPH--hemoprotein reductase] + 2 H2O + H(+). It carries out the reaction all-trans-retinal + reduced [NADPH--hemoprotein reductase] + O2 = all-trans-retinoate + oxidized [NADPH--hemoprotein reductase] + H2O + 2 H(+). The enzyme catalyses (5Z,8Z,11Z,14Z)-eicosatetraenoate + reduced [NADPH--hemoprotein reductase] + O2 = (8R,9S)-epoxy-(5Z,11Z,14Z)-eicosatrienoate + oxidized [NADPH--hemoprotein reductase] + H2O + H(+). It catalyses the reaction (5Z,8Z,11Z,14Z)-eicosatetraenoate + reduced [NADPH--hemoprotein reductase] + O2 = (11R,12S)-epoxy-(5Z,8Z,14Z)-eicosatrienoate + oxidized [NADPH--hemoprotein reductase] + H2O + H(+). The catalysed reaction is (5Z,8Z,11Z,14Z)-eicosatetraenoate + reduced [NADPH--hemoprotein reductase] + O2 = (11S,12R)-epoxy-(5Z,8Z,14Z)-eicosatrienoate + oxidized [NADPH--hemoprotein reductase] + H2O + H(+). It carries out the reaction (5Z,8Z,11Z,14Z)-eicosatetraenoate + reduced [NADPH--hemoprotein reductase] + O2 = (14S,15R)-epoxy-(5Z,8Z,11Z)-eicosatrienoate + oxidized [NADPH--hemoprotein reductase] + H2O + H(+). The enzyme catalyses (5Z,8Z,11Z,14Z)-eicosatetraenoate + reduced [NADPH--hemoprotein reductase] + O2 = (14R,15S)-epoxy-(5Z,8Z,11Z)-eicosatrienoate + oxidized [NADPH--hemoprotein reductase] + H2O + H(+). It catalyses the reaction (5S)-hydroperoxy-(6E,8Z,11Z,14Z)-eicosatetraenoate = 5-oxo-(6E,8Z,11Z,14Z)-eicosatetraenoate + H2O. The catalysed reaction is (12S)-hydroperoxy-(5Z,8Z,10E,14Z)-eicosatetraenoate = 12-oxo-(5Z,8Z,10E,14Z)-eicosatetraenoate + H2O. It carries out the reaction (15S)-hydroperoxy-(5Z,8Z,11Z,13E)-eicosatetraenoate = 15-oxo-(5Z,8Z,11Z,13E)-eicosatetraenoate + H2O. The enzyme catalyses (13S)-hydroperoxy-(9Z,11E)-octadecadienoate = 13-oxo-(9Z,11E)-octadecadienoate + H2O. It functions in the pathway steroid hormone biosynthesis. The protein operates within cofactor metabolism; retinol metabolism. Its pathway is lipid metabolism; arachidonate metabolism. With respect to regulation, enzyme activity is increased by cytochrome b5. Enzyme activity is increased by liposomes containing anionic phospholipids, phosphatidic acid and cardiolipin. Inhibited by naringenin with an IC(50) of 5 uM. Its function is as follows. A cytochrome P450 monooxygenase involved in the metabolism of various endogenous substrates, including fatty acids, steroid hormones and vitamins. Mechanistically, uses molecular oxygen inserting one oxygen atom into a substrate, and reducing the second into a water molecule, with two electrons provided by NADPH via cytochrome P450 reductase (NADPH--hemoprotein reductase). Exhibits catalytic activity for the formation of hydroxyestrogens from 17beta-estradiol (E2), namely 2- and 4-hydroxy E2. Metabolizes testosterone and progesterone to B or D ring hydroxylated metabolites. May act as a major enzyme for all-trans retinoic acid biosynthesis in extrahepatic tissues. Catalyzes two successive oxidative transformation of all-trans retinol to all-trans retinal and then to the active form all-trans retinoic acid. Catalyzes the epoxidation of double bonds of certain PUFA. Converts arachidonic acid toward epoxyeicosatrienoic acid (EpETrE) regioisomers, 8,9-, 11,12-, and 14,15- EpETrE, that function as lipid mediators in the vascular system. Additionally, displays dehydratase activity toward oxygenated eicosanoids including hydroperoxyeicosatetraenoates (HpETEs). This activity is independent of cytochrome P450 reductase, NADPH, and O2. Also involved in the oxidative metabolism of xenobiotics, particularly converting polycyclic aromatic hydrocarbons and heterocyclic aryl amines procarcinogens to DNA-damaging products. Plays an important role in retinal vascular development. Under ambient/hyperoxic O2 conditions, promotes angiogenesis and capillary morphogenesis of retinal endothelial cells and pericytes, likely by metabolizing the oxygenated products symptomatic of oxidative stress. Also, contributes to oxidative homeostasis and ultrastructural organization and function of trabecular meshwork tissue through modulation of POSTN expression. The sequence is that of Cytochrome P450 1B1 from Rattus norvegicus (Rat).